A 548-amino-acid polypeptide reads, in one-letter code: MANEVISGEQLQRVIRDAADLVVSSAGVTLGPEGRPVIMSKSYGGPEVTKDGYKVMNQLKPEDEKVAKIVELLNQATSQANEKAGDGTTTATILVGNMIKNAHKHIAAQRSRMKLKSGMKRARDEVVKYIQSVAKKINSEEEIAQVGSISANGNSEIGGKIAEAMNKVGKEGVITVEEGKGLDEFSVSVVQGMVFDRGYVSPYFITNPEKMIVEFDNPYVLLANKKLSSIQPMVPLLETIVRSNRAVVIIAEDVEGEALTSLVLSKMRGSLKACAVKAPGFGDRRSEMLEDIRILTGAKTLVSDDLGVTVESLTVEDLGTAKSIIISKDSTTIVDGGGEKTAIEARVKQIKTQIDKTTSDYDKEKLQERLAKLAGGVAVLKVGGATEVEVKERKDRVEDALHATRAAVEEGIVPGGGATLLSAIAVLEKLSSDDDDEQAGINIVKTALKAPISQIVENAGEDASVITYNLLESKDPNRIFDARELKYVDAFKAGIIDPAKVVRVALESAVSVASVLVTTEALIVDLPTKDNGSSSMMPGGGMGGMGGF.

Residues 29 to 32, Lys50, 86 to 90, Gly416, and Asp497 each bind ATP; these read TLGP and DGTTT.

It belongs to the chaperonin (HSP60) family. In terms of assembly, forms a cylinder of 14 subunits composed of two heptameric rings stacked back-to-back. Interacts with the co-chaperonin GroES.

It is found in the cytoplasm. The catalysed reaction is ATP + H2O + a folded polypeptide = ADP + phosphate + an unfolded polypeptide.. Functionally, together with its co-chaperonin GroES, plays an essential role in assisting protein folding. The GroEL-GroES system forms a nano-cage that allows encapsulation of the non-native substrate proteins and provides a physical environment optimized to promote and accelerate protein folding. This chain is Chaperonin GroEL, found in Neorickettsia sennetsu (strain ATCC VR-367 / Miyayama) (Ehrlichia sennetsu).